A 433-amino-acid chain; its full sequence is Voltage-gated potassium channel regulatory subunit KCNG3 (433 aa).

The Cytoplasmic segment spans residues 1-165 (MTFGRGGAAS…RTFEEPTSSL (165 aa)). The helical transmembrane segment at 166-187 (AAQILASVSVVFVIVSMVVLCA) threads the bilayer. Residues 188–217 (STLPDWRAAVADNRSLDDRSRYSASPGREP) are Extracellular-facing. The helical transmembrane segment at 218–239 (SGIIEAICIGWFTAECIVRFIV) threads the bilayer. Residues 240-250 (SKNKCEFVKRP) are Cytoplasmic-facing. Residues 251–271 (LNIIDLLAITPYYISVLMTVF) traverse the membrane as a helical segment. Residues 272–281 (TGENSQLQRA) are Extracellular-facing. Residues 282–302 (GVTLRVLRMMRIFWVIKLARH) traverse the membrane as a helical; Voltage-sensor segment. The Cytoplasmic segment spans residues 303-317 (FIGLQTLGLTLKRCY). The chain crosses the membrane as a helical span at residues 318–339 (REMAMLLVFICVAMAIFSALSQ). Topologically, residues 340 to 357 (LLEHGLDLETSNKDFASI) are extracellular. Residues 358 to 369 (PAACWWVIISMT) constitute an intramembrane region (helical). Positions 370 to 375 (TVGYGD) match the Selectivity filter motif. The stretch at 370 to 377 (TVGYGDMY) is an intramembrane region. The Extracellular segment spans residues 378-384 (PITVPGR). The helical transmembrane segment at 385 to 413 (ILGGVCVVSGIVLLALPITFIYHSFVQCY) threads the bilayer. Residues 414 to 433 (HELKFRSARYSRSLSAEFLN) are Cytoplasmic-facing.

This sequence belongs to the potassium channel family. G (TC 1.A.1.2) subfamily. Kv6.3/KCNG3 sub-subfamily. In terms of assembly, heterotetramer with KCNB1. Does not form homomultimers.

It localises to the cell membrane. The protein localises to the cytoplasm. Functionally, regulatory subunit of the voltage-gated potassium (Kv) channel which, when coassembled with KCNB1, modulates the kinetics parameters of the heterotetrameric channel namely the inactivation and deactivation rate. Potassium channel subunit that does not form functional channels by itself. Reduces the deactivation rate. Moderately acceleratee activation. The polypeptide is Voltage-gated potassium channel regulatory subunit KCNG3 (Mus musculus (Mouse)).